The sequence spans 108 residues: UPF0235 protein RPB_0109 (108 aa).

The protein belongs to the UPF0235 family.

In Rhodopseudomonas palustris (strain HaA2), this protein is UPF0235 protein RPB_0109.